The primary structure comprises 228 residues: U1 small nuclear ribonucleoprotein C (228 aa).

The Matrin-type zinc-finger motif lies at 4–36 (YYCEYCDIYLTHSSPVGRRQHVQGRKHISAKIE). A compositionally biased stretch (basic and acidic residues) spans 179 to 190 (LVKDNPNEERNG). Residues 179–228 (LVKDNPNEERNGDSAIANQPSTMHHEEDQDDPANATGGTANNNDNVSINA) form a disordered region. Positions 211 to 221 (ANATGGTANNN) are enriched in low complexity.

It belongs to the U1 small nuclear ribonucleoprotein C family. In terms of assembly, U1 snRNP is composed of the 7 core Sm proteins B/B', D1, D2, D3, E, F and G that assemble in a heptameric protein ring on the Sm site of the small nuclear RNA to form the core snRNP, and at least 3 U1 snRNP-specific proteins U1-70K, U1-A and U1-C. U1-C interacts with U1 snRNA and the 5' splice-site region of the pre-mRNA.

The protein localises to the nucleus. In terms of biological role, component of the spliceosomal U1 snRNP, which is essential for recognition of the pre-mRNA 5' splice-site and the subsequent assembly of the spliceosome. U1-C is directly involved in initial 5' splice-site recognition for both constitutive and regulated alternative splicing. The interaction with the 5' splice-site seems to precede base-pairing between the pre-mRNA and the U1 snRNA. Stimulates commitment or early (E) complex formation by stabilizing the base pairing of the 5' end of the U1 snRNA and the 5' splice-site region. The protein is U1 small nuclear ribonucleoprotein C of Plasmodium knowlesi (strain H).